We begin with the raw amino-acid sequence, 505 residues long: Glycerol kinase 1 (505 aa).

T13 contributes to the ADP binding site. T13, T14, and S15 together coordinate ATP. T13 serves as a coordination point for sn-glycerol 3-phosphate. R17 contributes to the ADP binding site. Sn-glycerol 3-phosphate is bound by residues R83, E84, and Y135. 3 residues coordinate glycerol: R83, E84, and Y135. Phosphohistidine; by HPr is present on H231. Position 245 (D245) interacts with sn-glycerol 3-phosphate. Residues D245 and Q246 each contribute to the glycerol site. Residues T267 and G310 each coordinate ADP. Residues T267, G310, Q314, and G411 each contribute to the ATP site. Positions 411 and 415 each coordinate ADP.

It belongs to the FGGY kinase family. As to quaternary structure, homotetramer and homodimer (in equilibrium). Post-translationally, the phosphoenolpyruvate-dependent sugar phosphotransferase system (PTS), including enzyme I, and histidine-containing protein (HPr) are required for the phosphorylation, which leads to the activation of the enzyme.

The catalysed reaction is glycerol + ATP = sn-glycerol 3-phosphate + ADP + H(+). It participates in polyol metabolism; glycerol degradation via glycerol kinase pathway; sn-glycerol 3-phosphate from glycerol: step 1/1. With respect to regulation, activated by phosphorylation and inhibited by fructose 1,6-bisphosphate (FBP). Its function is as follows. Key enzyme in the regulation of glycerol uptake and metabolism. Catalyzes the phosphorylation of glycerol to yield sn-glycerol 3-phosphate. This is Glycerol kinase 1 from Lactiplantibacillus plantarum (strain ATCC BAA-793 / NCIMB 8826 / WCFS1) (Lactobacillus plantarum).